A 293-amino-acid chain; its full sequence is Mycothiol S-conjugate amidase (293 aa).

Zn(2+) contacts are provided by His-13, Asp-16, and His-144.

It belongs to the MshB deacetylase family. Mca subfamily. As to quaternary structure, monomer. Zn(2+) serves as cofactor.

The enzyme catalyses mycothiol S-conjugate + H2O = an N-acetyl-L-cysteine-S-conjugate + 1D-myo-inositol 2-amino-2-deoxy-alpha-D-glucopyranoside. A mycothiol (MSH, N-acetylcysteinyl-glucosaminyl-inositol) S-conjugate amidase, it recycles conjugated MSH to the N-acetyl cysteine conjugate (AcCys S-conjugate, a mercapturic acid) and the MSH precursor. Involved in MSH-dependent detoxification of a number of alkylating agents and antibiotics. The chain is Mycothiol S-conjugate amidase from Streptomyces coelicolor (strain ATCC BAA-471 / A3(2) / M145).